A 410-amino-acid chain; its full sequence is Translation initiation factor 2 subunit gamma (410 aa).

Positions 6-203 (QSEINIGMVG…AIEDLMPTPE (198 aa)) constitute a tr-type G domain. The G1 stretch occupies residues 15-22 (GHVDHGKT). Mg(2+) is bound by residues Asp-18, Thr-22, Gly-43, and Ser-45. Residue 18–23 (DHGKTS) coordinates GTP. Residues 43-47 (GISIR) are G2. Positions 58, 61, 73, and 76 each coordinate Zn(2+). The G3 stretch occupies residues 90–93 (DAPG). GTP-binding positions include 146–149 (NKID) and 181–183 (SAH). The tract at residues 146–149 (NKID) is G4. The tract at residues 181–183 (SAH) is G5.

Belongs to the TRAFAC class translation factor GTPase superfamily. Classic translation factor GTPase family. EIF2G subfamily. Heterotrimer composed of an alpha, a beta and a gamma chain. Mg(2+) serves as cofactor.

It carries out the reaction GTP + H2O = GDP + phosphate + H(+). In terms of biological role, eIF-2 functions in the early steps of protein synthesis by forming a ternary complex with GTP and initiator tRNA. The chain is Translation initiation factor 2 subunit gamma from Methanococcus aeolicus (strain ATCC BAA-1280 / DSM 17508 / OCM 812 / Nankai-3).